A 1192-amino-acid chain; its full sequence is Probable ATP-binding protein BrxC (1192 aa).

The protein belongs to the BrxC family.

Its function is as follows. BREX systems (bacteriophage exclusion) provide immunity against bacteriophage. A core protein of a type 1 BREX system. This system allows phage adsorption but prevents phage DNA replication, without degradation of the phage DNA. Methylation of bacterial DNA by PglX probably guides self/non-self discrimination. When the brxA-brxB-brxC-pglX and pglZ-brxL operons are transformed into a susceptible B.subtilis strain (BEST7003) they confer resistance to bacteriophages SPbeta, SP16, Zeta, phi3T and SP02 and partial protection to phages SP01 and SP82G (these include lytic and temperate phage). They do not protect against phages phi105, rho10 or rho14. Additionally confers a very slight reduction in efficiency of plasmid transformation. This is Probable ATP-binding protein BrxC from Bacillus cereus (strain H3081.97).